The primary structure comprises 355 residues: Chemerin-like receptor 2 (355 aa).

Over methionine 1–serine 41 the chain is Extracellular. N-linked (GlcNAc...) asparagine glycosylation occurs at asparagine 14. A helical transmembrane segment spans residues leucine 42–phenylalanine 62. The Cytoplasmic portion of the chain corresponds to threonine 63 to threonine 73. A helical transmembrane segment spans residues leucine 74–isoleucine 94. Topologically, residues serine 95–alanine 112 are extracellular. Cysteine 110 and cysteine 187 are joined by a disulfide. Residues asparagine 113–leucine 133 form a helical membrane-spanning segment. Over aspartate 134–serine 154 the chain is Cytoplasmic. The chain crosses the membrane as a helical span at residues leucine 155–phenylalanine 175. Topologically, residues arginine 176–lysine 210 are extracellular. The helical transmembrane segment at phenylalanine 211–phenylalanine 231 threads the bilayer. The Cytoplasmic segment spans residues lysine 232 to threonine 247. A helical membrane pass occupies residues isoleucine 248–tryptophan 268. The Extracellular portion of the chain corresponds to glutamate 269–isoleucine 286. Residues proline 287–isoleucine 307 form a helical membrane-spanning segment. The Cytoplasmic portion of the chain corresponds to serine 308–glutamine 355.

The protein belongs to the chemokine-like receptor (CMKLR) family.

It is found in the cell membrane. Receptor for chemoattractant adipokine chemerin/RARRES2 suggesting a role for this receptor in the regulation of inflammation and energy homesotasis. Signals mainly via beta-arrestin pathway. Binding of RARRES2 activates weakly G proteins, calcium mobilization and MAPK1/MAPK3 (ERK1/2) phosphorylation too. Acts also as a receptor for TAFA1, mediates its effects on neuronal stem-cell proliferation and differentiation via the activation of ROCK/ERK and ROCK/STAT3 signaling pathway. In Macaca mulatta (Rhesus macaque), this protein is Chemerin-like receptor 2 (CMKLR2).